The chain runs to 404 residues: Cysteine desulfurase IscS (404 aa).

Pyridoxal 5'-phosphate contacts are provided by residues 75–76 (AT), asparagine 155, glutamine 183, and 203–205 (SAH). The residue at position 206 (lysine 206) is an N6-(pyridoxal phosphate)lysine. Threonine 243 provides a ligand contact to pyridoxal 5'-phosphate. Cysteine 328 (cysteine persulfide intermediate) is an active-site residue. Cysteine 328 provides a ligand contact to [2Fe-2S] cluster.

It belongs to the class-V pyridoxal-phosphate-dependent aminotransferase family. NifS/IscS subfamily. In terms of assembly, homodimer. Forms a heterotetramer with IscU, interacts with other sulfur acceptors. Pyridoxal 5'-phosphate serves as cofactor.

It is found in the cytoplasm. It catalyses the reaction (sulfur carrier)-H + L-cysteine = (sulfur carrier)-SH + L-alanine. The protein operates within cofactor biosynthesis; iron-sulfur cluster biosynthesis. In terms of biological role, master enzyme that delivers sulfur to a number of partners involved in Fe-S cluster assembly, tRNA modification or cofactor biosynthesis. Catalyzes the removal of elemental sulfur atoms from cysteine to produce alanine. Functions as a sulfur delivery protein for Fe-S cluster synthesis onto IscU, an Fe-S scaffold assembly protein, as well as other S acceptor proteins. The polypeptide is Cysteine desulfurase IscS (Proteus mirabilis (strain HI4320)).